A 938-amino-acid polypeptide reads, in one-letter code: Isoleucine--tRNA ligase (938 aa).

Positions P58–H68 match the 'HIGH' region motif. E561 provides a ligand contact to L-isoleucyl-5'-AMP. Residues K602–S606 carry the 'KMSKS' region motif. K605 lines the ATP pocket. Zn(2+)-binding residues include C901, C904, C921, and C924.

This sequence belongs to the class-I aminoacyl-tRNA synthetase family. IleS type 1 subfamily. In terms of assembly, monomer. It depends on Zn(2+) as a cofactor.

It localises to the cytoplasm. The enzyme catalyses tRNA(Ile) + L-isoleucine + ATP = L-isoleucyl-tRNA(Ile) + AMP + diphosphate. Catalyzes the attachment of isoleucine to tRNA(Ile). As IleRS can inadvertently accommodate and process structurally similar amino acids such as valine, to avoid such errors it has two additional distinct tRNA(Ile)-dependent editing activities. One activity is designated as 'pretransfer' editing and involves the hydrolysis of activated Val-AMP. The other activity is designated 'posttransfer' editing and involves deacylation of mischarged Val-tRNA(Ile). The chain is Isoleucine--tRNA ligase from Yersinia pseudotuberculosis serotype O:1b (strain IP 31758).